The following is a 737-amino-acid chain: Autophagy-related protein 22 (737 aa).

The segment at 115 to 154 (RMSPANAGDNSDSYPYGDDTDGDSSSGLPPPRYPGDDTRP) is disordered. The segment covering 125–141 (SDSYPYGDDTDGDSSSG) has biased composition (low complexity). Transmembrane regions (helical) follow at residues 166–186 (YAFA…PILL), 232–252 (SFAM…VVSI), 264–284 (KLLL…IFIS), and 289–309 (LIGA…FVLL). The segment at 327-353 (GDYGSPGYATTEEGDDEDDEYQEDSTR) is disordered. The span at 338–349 (EEGDDEDDEYQE) shows a compositional bias: acidic residues. Residue Asn354 is glycosylated (N-linked (GlcNAc...) asparagine). The chain crosses the membrane as a helical span at residues 395–415 (GIGIGYIAGLFLQCVAIAILI). A glycan (N-linked (GlcNAc...) asparagine) is linked at Asn419. 7 helical membrane-spanning segments follow: residues 426–446 (IVLC…AMWL), 487–507 (LVDI…IATT), 524–544 (WALG…AFSW), 559–579 (ILAC…GYLP), 593–613 (WEMY…SGYC), 632–652 (LYAI…GAII), and 661–681 (AFWF…FINV).

Belongs to the ATG22 family.

The protein localises to the vacuole membrane. In terms of biological role, vacuolar effluxer which mediate the efflux of amino acids resulting from autophagic degradation. The release of autophagic amino acids allows the maintenance of protein synthesis and viability during nitrogen starvation. The protein is Autophagy-related protein 22 (apg-11) of Neurospora crassa (strain ATCC 24698 / 74-OR23-1A / CBS 708.71 / DSM 1257 / FGSC 987).